The primary structure comprises 481 residues: MATSATSPHAPGFPAEGRCGYYVEKKKRFCRMVVAAGKRFCGEHAGAAEEEDARKRILCPLDPKHTVYEDQLAKHLKKCNSREKPKPDFYIQDINAGLRDETEIPEQLVPISSLSEEQLEKLIKKLRKASEGLNSTLKDHIMSHPALHDALNDPKNGDSATKHLKQQASILGNIENLKLLGPRRCFVEFGAGKGKLSHWVDIALKDAEKVHFILVEKVTTRFKVDGKHRKKNSVFERLQIDIQHLCLNKIPVLREEKLPVVGIGKHLCGMATDLALRCLVETYAASFEERNEEPLAKRIKNDKTEKEIYTLAKEGNEKNVPEKWNPVAGIVIALCCHHRCDWRHYVGKEYFRALGLGAVEFHYFQRMSSWATCGMRKTSLETSNSTTKRQDNQNDDSEEHDDGGYRITDDGADCLPGLLSVEEKKKIGHLCKLLIDQGRIQYLQQKGFSPALQYYTDPLVSLENVLLTALPNHSSSPETTA.

Ala-2 is modified (N-acetylalanine). The segment at 56–83 adopts a CHHC U11-48K-type zinc-finger fold; that stretch reads RILCPLDPKHTVYEDQLAKHLKKCNSRE. Zn(2+) is bound by residues Cys-59, His-65, His-75, and Cys-79. Residues 113–140 are a coiled coil; it reads SLSEEQLEKLIKKLRKASEGLNSTLKDH. Residues 381–408 are disordered; that stretch reads ETSNSTTKRQDNQNDDSEEHDDGGYRIT.

It belongs to the methyltransferase TRM13 family.

The catalysed reaction is cytidine(4) in tRNA(Pro) + S-adenosyl-L-methionine = 2'-O-methylcytidine(4) in tRNA(Pro) + S-adenosyl-L-homocysteine + H(+). The enzyme catalyses cytidine(4) in tRNA(Gly)(GCC) + S-adenosyl-L-methionine = 2'-O-methylcytidine(4) in tRNA(Gly)(GCC) + S-adenosyl-L-homocysteine + H(+). It catalyses the reaction adenosine(4) in tRNA(His) + S-adenosyl-L-methionine = 2'-O-methyladenosine(4) in tRNA(His) + S-adenosyl-L-homocysteine + H(+). TRNA methylase which 2'-O-methylates cytidine(4) in tRNA(Pro) and tRNA(Gly)(GCC), and adenosine(4) in tRNA(His). The chain is tRNA:m(4)X modification enzyme TRM13 homolog (TRMT13) from Homo sapiens (Human).